The sequence spans 277 residues: Large ribosomal subunit protein uL2 (277 aa).

Disordered stretches follow at residues 35–57 (RPLH…QGGG) and 222–277 (GVAM…NRRR). Composition is skewed to basic residues over residues 37-57 (LHSK…QGGG) and 268-277 (VRRRKQNRRR).

This sequence belongs to the universal ribosomal protein uL2 family. Part of the 50S ribosomal subunit. Forms a bridge to the 30S subunit in the 70S ribosome.

In terms of biological role, one of the primary rRNA binding proteins. Required for association of the 30S and 50S subunits to form the 70S ribosome, for tRNA binding and peptide bond formation. It has been suggested to have peptidyltransferase activity; this is somewhat controversial. Makes several contacts with the 16S rRNA in the 70S ribosome. The sequence is that of Large ribosomal subunit protein uL2 from Frankia casuarinae (strain DSM 45818 / CECT 9043 / HFP020203 / CcI3).